Reading from the N-terminus, the 398-residue chain is MSISKSLVLNEIKKFSPSHIIIGYSGGVDSSVLLNISKELDIPLIAIYINHNLHRDSLKWQIHCQQTCQKYNLQFISHSLDKVPKGESFEAWASKQRMAFFQKIMQQYSKPLLLLGHHQDDQAETFLIQAIRGSGLAGLAGIPHYKELHHGGVLRPLLKYSKIEIEGFAKLNNISYIYDDSNEDIKYRRNLIRNQIIPILQQVNPNISQTLSRSANICAESNNILQKLLTERLQSISQDTNLIISELIKLDDDIQKNLLHLWFKQNTQQSLKSKQIKELHLAVNNPSTGWQIDISNYYQIHIQYNQLIIKYPTTINDISKEDIISWLSKNLNEEIDLTKIVIRDRKPDDKCKYRGRNKPNKLKILFQELQIPTTERSKAKIILKDQQIIAVYPFFICG.

25–30 (SGGVDS) lines the ATP pocket.

This sequence belongs to the tRNA(Ile)-lysidine synthase family.

The protein localises to the cytoplasm. The catalysed reaction is cytidine(34) in tRNA(Ile2) + L-lysine + ATP = lysidine(34) in tRNA(Ile2) + AMP + diphosphate + H(+). Functionally, ligates lysine onto the cytidine present at position 34 of the AUA codon-specific tRNA(Ile) that contains the anticodon CAU, in an ATP-dependent manner. Cytidine is converted to lysidine, thus changing the amino acid specificity of the tRNA from methionine to isoleucine. This is tRNA(Ile)-lysidine synthase from Francisella tularensis subsp. tularensis (strain SCHU S4 / Schu 4).